The primary structure comprises 847 residues: Histidine decarboxylase (847 aa).

Residues F80 and H193 each contribute to the substrate site. K304 bears the N6-(pyridoxal phosphate)lysine mark. Positions 575–605 are enriched in polar residues; that stretch reads GNGATRTSTTNSYGHTTSAAQANSERQASIQ. Disordered regions lie at residues 575 to 662, 769 to 798, and 813 to 847; these read GNGA…RSSP, QSQS…MSSL, and SQPM…MESL. Residues 606-616 are compositionally biased toward acidic residues; the sequence is EDNEESPEETE. 2 stretches are compositionally biased toward low complexity: residues 634–657 and 769–787; these read SLST…TQSS and QSQS…LSGG. Polar residues predominate over residues 832 to 847; the sequence is DSDATVCSTTSSMESL.

This sequence belongs to the group II decarboxylase family. In terms of assembly, homodimer. Pyridoxal 5'-phosphate is required as a cofactor. In terms of tissue distribution, localized primarily to the photoreceptors, in the eye.

The catalysed reaction is L-histidine + H(+) = histamine + CO2. Its function is as follows. Required in photoreceptor transmitter synthesis. Catlayzes the conversion of L-histidine to histamine. The sequence is that of Histidine decarboxylase (Hdc) from Drosophila melanogaster (Fruit fly).